A 442-amino-acid chain; its full sequence is Interferon-related developmental regulator 2 (442 aa).

Over residues 1-15 (MPRARKGNTLRKGGQ) the composition is skewed to basic residues. The interval 1 to 71 (MPRARKGNTL…DVVDEQGQQE (71 aa)) is disordered. Over residues 43–56 (TASECPSLLSTTAE) the composition is skewed to polar residues.

This sequence belongs to the IFRD family. In terms of assembly, associates with ribosomes; promoting ribosome inactivation. Expressed in many tissues including heart, brain, placenta, lung, liver, skeletal muscle, kidney and pancreas.

Functionally, ribosome-binding protein that acts as an inhibitor of mRNA translation by promoting ribosome inactivation. Associates with the P- and E-sites of the ribosome and inserts a C-terminal helix into the mRNA exit channel to preclude translation. This Homo sapiens (Human) protein is Interferon-related developmental regulator 2.